The primary structure comprises 118 residues: NADH-quinone oxidoreductase subunit A (118 aa).

Transmembrane regions (helical) follow at residues 6-26, 61-81, and 87-107; these read LIIGIFLIASFIFGMVVLLTA, FMYGLVFLLFDVETVFLLPWA, and LGLFALFEMVIFIGILIIGLW.

The protein belongs to the complex I subunit 3 family. As to quaternary structure, NDH-1 is composed of 14 different subunits. Subunits NuoA, H, J, K, L, M, N constitute the membrane sector of the complex.

It is found in the cell membrane. It catalyses the reaction a quinone + NADH + 5 H(+)(in) = a quinol + NAD(+) + 4 H(+)(out). NDH-1 shuttles electrons from NADH, via FMN and iron-sulfur (Fe-S) centers, to quinones in the respiratory chain. The immediate electron acceptor for the enzyme in this species is believed to be a menaquinone. Couples the redox reaction to proton translocation (for every two electrons transferred, four hydrogen ions are translocated across the cytoplasmic membrane), and thus conserves the redox energy in a proton gradient. The chain is NADH-quinone oxidoreductase subunit A from Clostridium beijerinckii (strain ATCC 51743 / NCIMB 8052) (Clostridium acetobutylicum).